A 196-amino-acid chain; its full sequence is UMP-CMP kinase (196 aa).

13 to 18 (GAGKGT) is an ATP binding site. Position 33 is a phosphoserine (Ser-33). The NMP stretch occupies residues 33 to 63 (SAGELLRDERKNPDSQYGELIEKYIKDGKIV). Arg-39 provides a ligand contact to a ribonucleoside 5'-phosphate. Lys-43 and Lys-55 each carry N6-acetyllysine. A ribonucleoside 5'-phosphate is bound by residues 61 to 63 (KIV) and 93 to 96 (GFPR). Residue Asn-100 coordinates CMP. Position 106 is an N6-succinyllysine (Lys-106). Residues 133–143 (ERGKSSGRSDD) form an LID region. Position 134 (Arg-134) interacts with ATP. A ribonucleoside 5'-phosphate is bound by residues Arg-140 and Arg-151. Position 179 (Lys-179) interacts with ATP. A Phosphoserine modification is found at Ser-180.

The protein belongs to the adenylate kinase family. UMP-CMP kinase subfamily. In terms of assembly, monomer. Requires Mg(2+) as cofactor.

Its subcellular location is the nucleus. It localises to the cytoplasm. The enzyme catalyses CMP + ATP = CDP + ADP. It catalyses the reaction dCMP + ATP = dCDP + ADP. The catalysed reaction is UMP + ATP = UDP + ADP. It carries out the reaction a 2'-deoxyribonucleoside 5'-diphosphate + ATP = a 2'-deoxyribonucleoside 5'-triphosphate + ADP. The enzyme catalyses a ribonucleoside 5'-diphosphate + ATP = a ribonucleoside 5'-triphosphate + ADP. Functionally, catalyzes the phosphorylation of pyrimidine nucleoside monophosphates at the expense of ATP. Plays an important role in de novo pyrimidine nucleotide biosynthesis. Has preference for UMP and CMP as phosphate acceptors. Also displays broad nucleoside diphosphate kinase activity. This chain is UMP-CMP kinase, found in Bos taurus (Bovine).